A 569-amino-acid polypeptide reads, in one-letter code: Proline--tRNA ligase (569 aa).

The protein belongs to the class-II aminoacyl-tRNA synthetase family. ProS type 1 subfamily. Homodimer.

The protein localises to the cytoplasm. The catalysed reaction is tRNA(Pro) + L-proline + ATP = L-prolyl-tRNA(Pro) + AMP + diphosphate. Its function is as follows. Catalyzes the attachment of proline to tRNA(Pro) in a two-step reaction: proline is first activated by ATP to form Pro-AMP and then transferred to the acceptor end of tRNA(Pro). As ProRS can inadvertently accommodate and process non-cognate amino acids such as alanine and cysteine, to avoid such errors it has two additional distinct editing activities against alanine. One activity is designated as 'pretransfer' editing and involves the tRNA(Pro)-independent hydrolysis of activated Ala-AMP. The other activity is designated 'posttransfer' editing and involves deacylation of mischarged Ala-tRNA(Pro). The misacylated Cys-tRNA(Pro) is not edited by ProRS. The protein is Proline--tRNA ligase of Campylobacter jejuni subsp. jejuni serotype O:2 (strain ATCC 700819 / NCTC 11168).